Consider the following 224-residue polypeptide: Cerebellin-2 (224 aa).

Residues 1-51 (MQAPGRGPLGLRLMMPGRRGALREPGGCGSCLGVALALLLLLLPACCPVRA) form the signal peptide. N53 and N110 each carry an N-linked (GlcNAc...) asparagine glycan. One can recognise a C1q domain in the interval 88–224 (SGSAKVAFSA…TFSGFLVFPL (137 aa)).

As to quaternary structure, homohexamer; disulfide-linked homotrimers. The trimers are assembled via the globular C1q domains. The trimers associate via N-terminal cysteine residues to form disulfide-linked hexamers. May form homooligomers or heterooligomers with CBLN1 and CBLN3 prior to secretion. Once secreted, does not interact with other CBLN family members. Interacts with GRID2, and more weakly with GRID1. Interacts with NRXN1 and NRXN2 long and short isoforms produced by alternative promoter usage. Weakly interacts with NRXN3 short isoform and not at all with NRXN3 long isoform.

The protein localises to the secreted. In terms of biological role, acts as a synaptic organizer in specific subsets of neurons in the brain. Essential for long-term maintenance but not establishment of excitatory synapses. Functions as part of a trans-synaptic complex by binding to postsynaptic GRID1 and presynaptic neurexins. This interaction helps regulate the activity of NMDA and AMPA receptors at hippocampal synapses without affecting synapse formation. NRXN1B-CBLN2-GRID1 complex transduce presynaptic signals into postsynaptic NMDAR response. NRXN3B-CBLN2-GRID1 complex transduce presynaptic signals into postsynaptic AMPAR response. The sequence is that of Cerebellin-2 from Homo sapiens (Human).